The sequence spans 103 residues: ATP-dependent Clp protease adapter protein ClpS 1 (103 aa).

The protein belongs to the ClpS family. In terms of assembly, binds to the N-terminal domain of the chaperone ClpA.

Its function is as follows. Involved in the modulation of the specificity of the ClpAP-mediated ATP-dependent protein degradation. The protein is ATP-dependent Clp protease adapter protein ClpS 1 of Rhodopseudomonas palustris (strain ATCC BAA-98 / CGA009).